We begin with the raw amino-acid sequence, 267 residues long: Probable ribosomal RNA small subunit methyltransferase A (267 aa).

5 residues coordinate S-adenosyl-L-methionine: Leu-12, Gly-37, Glu-58, Asp-83, and Asn-100.

It belongs to the class I-like SAM-binding methyltransferase superfamily. rRNA adenine N(6)-methyltransferase family. RsmA subfamily.

It localises to the cytoplasm. Functionally, specifically dimethylates two adjacent adenosines in the loop of a conserved hairpin near the 3'-end of 16S rRNA in the 30S particle. May play a critical role in biogenesis of 30S subunits. This chain is Probable ribosomal RNA small subunit methyltransferase A, found in Methanococcus vannielii (strain ATCC 35089 / DSM 1224 / JCM 13029 / OCM 148 / SB).